Consider the following 226-residue polypeptide: Ribonuclease 3 (226 aa).

Residues 7-129 (LPRLCRTLGY…IIGAIYLDSD (123 aa)) form the RNase III domain. Glu-42 lines the Mg(2+) pocket. The active site involves Asp-46. Mg(2+)-binding residues include Asp-115 and Glu-118. Residue Glu-118 is part of the active site. The 71-residue stretch at 156–226 (DAKTLLQEYL…AAQVLELLKK (71 aa)) folds into the DRBM domain.

The protein belongs to the ribonuclease III family. As to quaternary structure, homodimer. Requires Mg(2+) as cofactor.

The protein localises to the cytoplasm. The enzyme catalyses Endonucleolytic cleavage to 5'-phosphomonoester.. Functionally, digests double-stranded RNA. Involved in the processing of primary rRNA transcript to yield the immediate precursors to the large and small rRNAs (23S and 16S). Processes some mRNAs, and tRNAs when they are encoded in the rRNA operon. Processes pre-crRNA and tracrRNA of type II CRISPR loci if present in the organism. This chain is Ribonuclease 3, found in Shewanella sp. (strain ANA-3).